A 129-amino-acid polypeptide reads, in one-letter code: UPF0212 protein MA_1372 (129 aa).

This sequence belongs to the UPF0212 family.

This chain is UPF0212 protein MA_1372, found in Methanosarcina acetivorans (strain ATCC 35395 / DSM 2834 / JCM 12185 / C2A).